The sequence spans 349 residues: Protein-glutamate methylesterase/protein-glutamine glutaminase (349 aa).

A Response regulatory domain is found at 5-122 (RVLSVDDSAL…REGMLAYSEM (118 aa)). Position 56 is a 4-aspartylphosphate (aspartate 56). The CheB-type methylesterase domain maps to 152–344 (LLSSEKLIAI…QQMLAKISAG (193 aa)). Residues serine 164, histidine 190, and aspartate 286 contribute to the active site.

This sequence belongs to the CheB family. In terms of processing, phosphorylated by CheA. Phosphorylation of the N-terminal regulatory domain activates the methylesterase activity.

Its subcellular location is the cytoplasm. The catalysed reaction is [protein]-L-glutamate 5-O-methyl ester + H2O = L-glutamyl-[protein] + methanol + H(+). It carries out the reaction L-glutaminyl-[protein] + H2O = L-glutamyl-[protein] + NH4(+). Involved in chemotaxis. Part of a chemotaxis signal transduction system that modulates chemotaxis in response to various stimuli. Catalyzes the demethylation of specific methylglutamate residues introduced into the chemoreceptors (methyl-accepting chemotaxis proteins or MCP) by CheR. Also mediates the irreversible deamidation of specific glutamine residues to glutamic acid. This chain is Protein-glutamate methylesterase/protein-glutamine glutaminase, found in Escherichia coli O6:H1 (strain CFT073 / ATCC 700928 / UPEC).